We begin with the raw amino-acid sequence, 608 residues long: Chaperone protein DnaK (608 aa).

Threonine 175 carries the phosphothreonine; by autocatalysis modification.

It belongs to the heat shock protein 70 family.

Functionally, acts as a chaperone. The chain is Chaperone protein DnaK from Finegoldia magna (strain ATCC 29328 / DSM 20472 / WAL 2508) (Peptostreptococcus magnus).